Reading from the N-terminus, the 132-residue chain is Small ribosomal subunit protein uS8 (132 aa).

Belongs to the universal ribosomal protein uS8 family. Part of the 30S ribosomal subunit. Contacts proteins S5 and S12.

Its function is as follows. One of the primary rRNA binding proteins, it binds directly to 16S rRNA central domain where it helps coordinate assembly of the platform of the 30S subunit. In Rhodospirillum rubrum (strain ATCC 11170 / ATH 1.1.1 / DSM 467 / LMG 4362 / NCIMB 8255 / S1), this protein is Small ribosomal subunit protein uS8.